Reading from the N-terminus, the 814-residue chain is Protein kinase C-binding protein NELL2 (814 aa).

Positions 1-19 (MEFILGIFCVLFCLRAGAG) are cleaved as a signal peptide. N-linked (GlcNAc...) asparagine glycans are attached at residues N51, N223, and N296. One can recognise a Laminin G-like domain in the interval 53-226 (SKAFLFQDTS…SQCPDLNRTC (174 aa)). The VWFC 1 domain occupies 270–329 (RSCTVKGNIYRELESWMDGCKKCTCTNGTAQCETLTCSAPNCLSGFSPAYVPGKCCKECQ). In terms of domain architecture, EGF-like 1 spans 395–437 (GHDFCSEGHNCMGYSICKNLDDKAVCICRDGFRALREDNAYCE). 3 cysteine pairs are disulfide-bonded: C399–C411, C405–C420, and C422–C436. D438, I439, and E441 together coordinate Ca(2+). The EGF-like 2; calcium-binding domain occupies 438–479 (DIDECTEGRHYCRENTVCVNTPGSFMCVCQTGYLKIDDYSCT). Cystine bridges form between C442-C455, C449-C464, C466-C478, C484-C497, C491-C506, C508-C519, C523-C533, C527-C539, and C541-C550. Residues N457, T458, and S461 each contribute to the Ca(2+) site. An EGF-like 3; calcium-binding domain is found at 480-520 (EHNECATNQHSCDENAMCFNTVGGHNCVCQPGYTGNGTDCR). N515 carries an N-linked (GlcNAc...) asparagine glycan. An EGF-like 4 domain is found at 521 to 551 (AFCKDGCRNGGTCIAPNICACPQGFTGPSCE). Ca(2+)-binding residues include D553, I554, and E556. Residues 553–599 (DIDECTEGFVQCDSRANCINLPGWYHCECRDGYHDNGMFSLGGESCE) form the EGF-like 5; calcium-binding domain. 3 cysteine pairs are disulfide-bonded: C557–C570, C564–C579, and C581–C598. The Ca(2+) site is built by N572, L573, and W576. Ca(2+)-binding residues include D600, I601, and E603. An EGF-like 6; calcium-binding domain is found at 600-635 (DIDECATGRHSCSNDTVCFNLDGGFDCRCPHGKNCS). 3 disulfides stabilise this stretch: C604–C617, C611–C626, and C628–C634. N613 carries N-linked (GlcNAc...) asparagine glycosylation. N619, L620, and G623 together coordinate Ca(2+). N-linked (GlcNAc...) asparagine glycosylation is present at N633. 2 VWFC domains span residues 636 to 691 (GDCT…PECD) and 696 to 754 (SQCL…PRCV).

Homotrimer.

The protein localises to the secreted. Its function is as follows. May regulate neuronal differentiation, polarization and axon guidance. The polypeptide is Protein kinase C-binding protein NELL2 (nell2.L) (Xenopus laevis (African clawed frog)).